The sequence spans 134 residues: uncharacterized protein (134 aa).

An N-terminal signal peptide occupies residues 1 to 23 (MWHLRCSNWRGSGVFGMCFSLSG). Cys-24 carries the N-palmitoyl cysteine lipid modification. A lipid anchor (S-diacylglycerol cysteine) is attached at Cys-24.

It is found in the cell membrane. This is an uncharacterized protein from Treponema pallidum (strain Nichols).